Reading from the N-terminus, the 124-residue chain is Small ribosomal subunit protein uS12 (124 aa).

Residue Asp-89 is modified to 3-methylthioaspartic acid. A disordered region spans residues 103–124 (DTAGVKDRRQGRSKYGAKRPKD). The segment covering 113–124 (GRSKYGAKRPKD) has biased composition (basic residues).

It belongs to the universal ribosomal protein uS12 family. As to quaternary structure, part of the 30S ribosomal subunit. Contacts proteins S8 and S17. May interact with IF1 in the 30S initiation complex.

Its function is as follows. With S4 and S5 plays an important role in translational accuracy. In terms of biological role, interacts with and stabilizes bases of the 16S rRNA that are involved in tRNA selection in the A site and with the mRNA backbone. Located at the interface of the 30S and 50S subunits, it traverses the body of the 30S subunit contacting proteins on the other side and probably holding the rRNA structure together. The combined cluster of proteins S8, S12 and S17 appears to hold together the shoulder and platform of the 30S subunit. This is Small ribosomal subunit protein uS12 from Acaryochloris marina (strain MBIC 11017).